The following is a 199-amino-acid chain: NAD(P)H dehydrogenase (quinone) (199 aa).

Residues 4-190 (MLVLYYSAYG…DGARFQGRRV (187 aa)) enclose the Flavodoxin-like domain. FMN-binding positions include 10 to 15 (SAYGHM) and 78 to 80 (TRY). Position 12 (Y12) interacts with NAD(+). W98 is a substrate binding site. Residues 113–119 (STATQYG) and H134 contribute to the FMN site. Positions 161–181 (YGMTTTADGDGSRQPSAQELD) are disordered. The span at 163-177 (MTTTADGDGSRQPSA) shows a compositional bias: polar residues.

Belongs to the WrbA family. FMN serves as cofactor.

It catalyses the reaction a quinone + NADH + H(+) = a quinol + NAD(+). The enzyme catalyses a quinone + NADPH + H(+) = a quinol + NADP(+). The chain is NAD(P)H dehydrogenase (quinone) from Brucella canis (strain ATCC 23365 / NCTC 10854 / RM-666).